A 432-amino-acid polypeptide reads, in one-letter code: Serine/threonine-protein phosphatase 2A activator 1 (432 aa).

Belongs to the PTPA-type PPIase family.

The protein localises to the cytoplasm. It localises to the nucleus. The catalysed reaction is [protein]-peptidylproline (omega=180) = [protein]-peptidylproline (omega=0). In terms of biological role, PPIases accelerate the folding of proteins. It catalyzes the cis-trans isomerization of proline imidic peptide bonds in oligopeptides. Acts as a regulatory subunit for PP2A-like phosphatases modulating their activity or substrate specificity, probably by inducing a conformational change in the catalytic subunit, a direct target of the PPIase. Can reactivate inactive phosphatase PP2A-phosphatase methylesterase complexes (PP2Ai) in presence of ATP and Mg(2+) by dissociating the inactive form from the complex. The protein is Serine/threonine-protein phosphatase 2A activator 1 (rrd1) of Emericella nidulans (strain FGSC A4 / ATCC 38163 / CBS 112.46 / NRRL 194 / M139) (Aspergillus nidulans).